A 343-amino-acid polypeptide reads, in one-letter code: Nuclear distribution protein nudE-like 1 (343 aa).

Positions 25–190 form a coiled coil; the sequence is KYKQSFQEAR…LAVRERQQEV (166 aa). Disordered regions lie at residues 184 to 204 and 322 to 343; these read RERQQEVTRKSAPSSPTLDCE and QGTPGLGASRPSSAPGMLPLSV.

Belongs to the nudE family. In terms of processing, phosphorylated in mitosis.

It is found in the cytoplasm. The protein resides in the cytoskeleton. Its subcellular location is the microtubule organizing center. The protein localises to the centrosome. It localises to the spindle. Functionally, required for organization of the cellular microtubule array and microtubule anchoring at the centrosome. Positively regulates the activity of the minus-end directed microtubule motor protein dynein. May enhance dynein-mediated microtubule sliding by targeting dynein to the microtubule plus end. Positively regulates lysosome peripheral distribution and ruffled border formation in osteoclasts. This chain is Nuclear distribution protein nudE-like 1 (NDEL1), found in Gallus gallus (Chicken).